Consider the following 1271-residue polypeptide: Breakpoint cluster region protein (1271 aa).

Position 1 is an N-acetylmethionine (Met1). Residues 1 to 426 form a kinase region; the sequence is MVDPVGFAEA…DGEGAFHGDA (426 aa). The stretch at 28-55 forms a coiled coil; sequence VGDIEQELERCKASIRRLEQEVNQERFR. The disordered stretch occupies residues 67–173; that stretch reads KKSYDRQRWG…GHGQPGADAE (107 aa). The segment covering 87–105 has biased composition (low complexity); the sequence is ASEPRASASRPQPAPADGA. Phosphoserine is present on Ser122. A compositionally biased stretch (low complexity) spans 123-138; it reads PGKARPGTARRPGAAA. A Phosphoserine modification is found at Ser139. Tyr177 bears the Phosphotyrosine; by HCK mark. A compositionally biased stretch (basic and acidic residues) spans 185 to 198; it reads ERGLVKVNDKEVSD. Disordered regions lie at residues 185–247, 286–392, and 416–476; these read ERGL…GDYE, GMME…HKRH, and NDGE…SRDA. Residues 197 to 385 are binding to ABL SH2-domain; sequence SDRISSLGSQ…QSFDSSSPPT (189 aa). Over residues 199–208 the composition is skewed to polar residues; sequence RISSLGSQAM. 4 positions are modified to phosphoserine: Ser202, Ser215, Ser222, and Ser236. The residue at position 246 (Tyr246) is a Phosphotyrosine; by FES. Composition is skewed to low complexity over residues 346–356 and 369–382; these read SSGQSSRVSPS and SPSQ…DSSS. 3 positions are modified to phosphoserine: Ser356, Ser377, and Ser382. Residue Thr385 is modified to Phosphothreonine. Residues 441–451 show a composition bias toward basic and acidic residues; it reads DRAEEQRRHQD. Phosphoserine is present on residues Ser459 and Ser463. Omega-N-methylarginine is present on Arg471. Phosphoserine is present on residues Ser473 and Ser488. The 194-residue stretch at 498–691 folds into the DH domain; that stretch reads MRKWVLSGIL…QNFLSSINEE (194 aa). Position 554 is a phosphotyrosine (Tyr554). Thr641 is modified (phosphothreonine). Tyr644 bears the Phosphotyrosine mark. Thr693 carries the phosphothreonine modification. Positions 708 to 866 constitute a PH domain; the sequence is QLLKDSFMVE…WRENIREQQK (159 aa). Residues 893 to 1020 form the C2 domain; sequence HSIPLTINKE…QDRDWQRTVI (128 aa). A Phosphoserine modification is found at Ser894. Residues 1054–1248 form the Rho-GAP domain; the sequence is VKIAVVTKRE…VMSQVQVLLY (195 aa). Ser1264 carries the phosphoserine modification.

In terms of assembly, homotetramer. Interacts with PDZK1. May interact with CCPG1. Interacts with FES/FPS, ABL1, PIK3R1 and GRB2. Interacts with HCK. Interacts with SH2D5. Interacts with DLG4. Autophosphorylated. Phosphorylated by FES/FPS on tyrosine residues, leading to down-regulation of the BCR kinase activity. Phosphorylation at Tyr-177 by HCK is important for interaction with GRB2.

It is found in the postsynaptic density. The protein localises to the cell projection. Its subcellular location is the dendritic spine. It localises to the axon. The protein resides in the synapse. The catalysed reaction is L-seryl-[protein] + ATP = O-phospho-L-seryl-[protein] + ADP + H(+). The enzyme catalyses L-threonyl-[protein] + ATP = O-phospho-L-threonyl-[protein] + ADP + H(+). Protein with a unique structure having two opposing regulatory activities toward small GTP-binding proteins. The C-terminus is a GTPase-activating protein (GAP) domain which stimulates GTP hydrolysis by RAC1, RAC2 and CDC42. Accelerates the intrinsic rate of GTP hydrolysis of RAC1 or CDC42, leading to down-regulation of the active GTP-bound form. The central Dbl homology (DH) domain functions as guanine nucleotide exchange factor (GEF) that modulates the GTPases CDC42, RHOA and RAC1. Promotes the conversion of CDC42, RHOA and RAC1 from the GDP-bound to the GTP-bound form. The amino terminus contains an intrinsic kinase activity. Functions as an important negative regulator of neuronal RAC1 activity. Regulates macrophage functions such as CSF1-directed motility and phagocytosis through the modulation of RAC1 activity. Plays a major role as a RHOA GEF in keratinocytes being involved in focal adhesion formation and keratinocyte differentiation. This is Breakpoint cluster region protein from Homo sapiens (Human).